The primary structure comprises 59 residues: Large ribosomal subunit protein uL30 (59 aa).

The protein belongs to the universal ribosomal protein uL30 family. Part of the 50S ribosomal subunit.

The polypeptide is Large ribosomal subunit protein uL30 (Enterococcus faecalis (strain ATCC 700802 / V583)).